We begin with the raw amino-acid sequence, 558 residues long: Zinc finger protein piragua (558 aa).

Residues 15-94 (STCRLCHHNT…QEREQSLQEQ (80 aa)) form the ZAD domain. Cys-17, Cys-20, Cys-67, and Cys-70 together coordinate Zn(2+). Positions 132 to 177 (LAESSEEEFALGSDGEYENYDDDDEEEEEDYDEEDEEDGQNGEDVD) are enriched in acidic residues. Residues 132-178 (LAESSEEEFALGSDGEYENYDDDDEEEEEDYDEEDEEDGQNGEDVDM) are disordered. C2H2-type zinc fingers lie at residues 208–231 (FLCQYCDLGFTLPAECQEHELAAH), 237–260 (YCCNFCNIKLVTRPALISHIKTLH), 266–288 (YVCAHCRKGFVRRSDLKKHTIVH), 294–316 (FTCNVCSKSFSRNTNLTKHMRIH), 322–344 (FVCQQCPRSFQTAVEMMRHTRSH), 350–372 (FQCGRCPYSFSRRDKLIAHQQVH), 414–436 (YHCDVCDRTFQRERDLQRHQALH), 441–464 (FACKTCNQGFNRREQLQRHELEAH), and 468–490 (FTCGICCISFLHQIELENHLKVH).

Functionally, may be involved in transcriptional regulation. The function of this protein is unclear. According to one report, it is required for development and viability since mutants display defects in several developmental morphogenetic processes including dorsal closure and head involution, and die by the first instar larval stage. It may also be involved in fwe-mediated cellular competition. However, according to another report, it is not required for development or viability since mutants have no visible phenotype and are fertile. This is Zinc finger protein piragua from Drosophila melanogaster (Fruit fly).